Reading from the N-terminus, the 761-residue chain is Neurotrypsin (761 aa).

Residues 1–21 form the signal peptide; it reads MALARCVLAVILGALSVVARA. The disordered stretch occupies residues 25 to 87; the sequence is SRSPLHRPHP…PPTIPRRCGA (63 aa). Over residues 38-48 the composition is skewed to low complexity; that stretch reads RSQHAHYLPSS. The Kringle domain maps to 85–157; it reads CGAGESWGNA…GKVDWGYCDC (73 aa). 17 disulfides stabilise this stretch: Cys-85–Cys-157, Cys-101–Cys-141, Cys-130–Cys-155, Cys-191–Cys-255, Cys-204–Cys-265, Cys-235–Cys-245, Cys-298–Cys-361, Cys-311–Cys-371, Cys-341–Cys-351, Cys-411–Cys-475, Cys-424–Cys-485, Cys-455–Cys-465, Cys-505–Cys-636, Cys-547–Cys-563, Cys-651–Cys-717, Cys-680–Cys-694, and Cys-707–Cys-736. N-linked (GlcNAc...) asparagine glycosylation is present at Asn-93. 3 consecutive SRCR domains span residues 166 to 267, 273 to 373, and 386 to 487; these read IRLV…SCVP, IRLA…TCYP, and IRLV…ICDY. A zymogen activation region region spans residues 505 to 516; sequence CGLRLLHRRQKR. Residues 517–760 form the Peptidase S1 domain; that stretch reads IIGGNNSLRG…FVPWIKSVTS (244 aa). N-linked (GlcNAc...) asparagine glycosylation is present at Asn-521. His-562 (charge relay system) is an active-site residue. Residue Asn-569 is glycosylated (N-linked (GlcNAc...) asparagine). Asp-612 functions as the Charge relay system in the catalytic mechanism. Ser-711 (charge relay system) is an active-site residue.

Belongs to the peptidase S1 family. Most abundant in cerebral cortex, hippocampus and amygdala.

The protein localises to the secreted. Functionally, plays a role in neuronal plasticity and the proteolytic action may subserve structural reorganizations associated with learning and memory operations. This is Neurotrypsin (Prss12) from Mus musculus (Mouse).